The following is a 959-amino-acid chain: Ribonucleoside-diphosphate reductase large subunit (959 aa).

Residues T68, 83–84, and G112 contribute to the substrate site; that span reads SC. The cysteines at positions 84 and 626 are disulfide-linked. Residue N270 is the Proton acceptor of the active site. Residues 378 to 508 enclose the DOD-type homing endonuclease domain; the sequence is LPTLFGNSEH…IQLLLIGMGV (131 aa). The active-site Cysteine radical intermediate is C611. The Proton acceptor role is filled by E613. 751–755 lines the substrate pocket; sequence PTATS.

The protein belongs to the ribonucleoside diphosphate reductase large chain family. As to quaternary structure, heterotetramer composed of a homodimer of the large subunit (R1) and a homodimer of the small subunit (R2). Larger multisubunit protein complex are also active, composed of (R1)n(R2)n.

The enzyme catalyses a 2'-deoxyribonucleoside 5'-diphosphate + [thioredoxin]-disulfide + H2O = a ribonucleoside 5'-diphosphate + [thioredoxin]-dithiol. Under complex allosteric control mediated by deoxynucleoside triphosphates and ATP binding. The type of nucleotide bound at the specificity site determines substrate preference. It seems probable that ATP makes the enzyme reduce CDP and UDP, dGTP favors ADP reduction and dTTP favors GDP reduction. In terms of biological role, ribonucleoside-diphosphate reductase holoenzyme provides the precursors necessary for viral DNA synthesis. Allows virus growth in non-dividing cells. Catalyzes the biosynthesis of deoxyribonucleotides from the corresponding ribonucleotides. This Acheta domesticus (House cricket) protein is Ribonucleoside-diphosphate reductase large subunit.